The sequence spans 156 residues: Peptide deformylase 1 (156 aa).

Residues Cys-90 and His-132 each coordinate Fe cation. Residue Glu-133 is part of the active site. His-136 is a binding site for Fe cation.

It belongs to the polypeptide deformylase family. Fe(2+) is required as a cofactor.

It catalyses the reaction N-terminal N-formyl-L-methionyl-[peptide] + H2O = N-terminal L-methionyl-[peptide] + formate. Functionally, removes the formyl group from the N-terminal Met of newly synthesized proteins. Requires at least a dipeptide for an efficient rate of reaction. N-terminal L-methionine is a prerequisite for activity but the enzyme has broad specificity at other positions. The protein is Peptide deformylase 1 of Bacillus cereus (strain ATCC 14579 / DSM 31 / CCUG 7414 / JCM 2152 / NBRC 15305 / NCIMB 9373 / NCTC 2599 / NRRL B-3711).